The chain runs to 281 residues: Small ribosomal subunit protein uS3 (281 aa).

The KH type-2 domain maps to 38–106 (IRRLLSTGLE…QVQLNILEVK (69 aa)). The interval 218–281 (APAGAERARR…VTHEPQIAES (64 aa)) is disordered. The span at 238-256 (SGAAGTTVTGTDAGRAVGG) shows a compositional bias: low complexity.

Belongs to the universal ribosomal protein uS3 family. As to quaternary structure, part of the 30S ribosomal subunit. Forms a tight complex with proteins S10 and S14.

In terms of biological role, binds the lower part of the 30S subunit head. Binds mRNA in the 70S ribosome, positioning it for translation. This Mycobacterium leprae (strain Br4923) protein is Small ribosomal subunit protein uS3.